The sequence spans 525 residues: Ribonuclease Y (525 aa).

Residues 3–23 (IFFISLVLIVLASVVFFVGGF) form a helical membrane-spanning segment. One can recognise a KH domain in the interval 215-300 (ALSVVHIQSD…KAYEDAKKEI (86 aa)). The 93-residue stretch at 341-433 (LLQHSREVAM…VDAANVISLS (93 aa)) folds into the HD domain.

It belongs to the RNase Y family.

The protein resides in the cell membrane. Functionally, endoribonuclease that initiates mRNA decay. This is Ribonuclease Y from Chlorobium phaeobacteroides (strain DSM 266 / SMG 266 / 2430).